Consider the following 435-residue polypeptide: Glutamyl-tRNA reductase (435 aa).

Residues 49-52 (TCNR), Ser109, 114-116 (EGQ), and Gln120 contribute to the substrate site. Cys50 functions as the Nucleophile in the catalytic mechanism. Residue 198–203 (GAGRMS) participates in NADP(+) binding.

This sequence belongs to the glutamyl-tRNA reductase family. As to quaternary structure, homodimer.

The catalysed reaction is (S)-4-amino-5-oxopentanoate + tRNA(Glu) + NADP(+) = L-glutamyl-tRNA(Glu) + NADPH + H(+). Its pathway is porphyrin-containing compound metabolism; protoporphyrin-IX biosynthesis; 5-aminolevulinate from L-glutamyl-tRNA(Glu): step 1/2. It participates in porphyrin-containing compound metabolism; chlorophyll biosynthesis. In terms of biological role, catalyzes the NADPH-dependent reduction of glutamyl-tRNA(Glu) to glutamate 1-semialdehyde (GSA). In Prochlorococcus marinus (strain MIT 9211), this protein is Glutamyl-tRNA reductase.